A 142-amino-acid chain; its full sequence is Hemoglobin subunit alpha (142 aa).

Residues 2-142 (VLSATDKSNV…VSTVLTSKYR (141 aa)) form the Globin domain. Ser4 carries the post-translational modification Phosphoserine. An N6-succinyllysine mark is found at Lys8 and Lys12. At Lys17 the chain carries N6-acetyllysine; alternate. The residue at position 17 (Lys17) is an N6-succinyllysine; alternate. Tyr25 carries the phosphotyrosine modification. The residue at position 36 (Ser36) is a Phosphoserine. Lys41 carries the post-translational modification N6-succinyllysine. The residue at position 50 (Ser50) is a Phosphoserine. His59 contributes to the O2 binding site. Residue His88 coordinates heme b. Ser103 carries the post-translational modification Phosphoserine. Thr109 is subject to Phosphothreonine. Ser125 is subject to Phosphoserine. 2 positions are modified to phosphothreonine: Thr135 and Thr138. Residue Ser139 is modified to Phosphoserine.

It belongs to the globin family. As to quaternary structure, heterotetramer of two alpha chains and two beta chains. Red blood cells.

Functionally, involved in oxygen transport from the lung to the various peripheral tissues. In terms of biological role, hemopressin acts as an antagonist peptide of the cannabinoid receptor CNR1. Hemopressin-binding efficiently blocks cannabinoid receptor CNR1 and subsequent signaling. This is Hemoglobin subunit alpha (HBA) from Alces alces alces (European moose).